Here is a 520-residue protein sequence, read N- to C-terminus: Laccase-1 (520 aa).

The N-terminal stretch at methionine 1–alanine 19 is a signal peptide. Plastocyanin-like domains lie at threonine 21–tyrosine 145, valine 157–alanine 305, and threonine 375–alanine 488. Positions 82 and 84 each coordinate Cu cation. Cystine bridges form between cysteine 103–cysteine 509 and cysteine 135–cysteine 229. An N-linked (GlcNAc...) asparagine glycan is attached at asparagine 108. Cu cation-binding residues include histidine 127 and histidine 129. N-linked (GlcNAc...) asparagine glycans are attached at residues asparagine 239 and asparagine 299. Cu cation contacts are provided by histidine 417, histidine 420, histidine 422, histidine 470, cysteine 471, histidine 472, and histidine 476. The N-linked (GlcNAc...) asparagine glycan is linked to asparagine 492.

The protein belongs to the multicopper oxidase family. The cofactor is Cu cation.

It is found in the secreted. The enzyme catalyses 4 hydroquinone + O2 = 4 benzosemiquinone + 2 H2O. Functionally, lignin degradation and detoxification of lignin-derived products. In Agaricus bisporus (White button mushroom), this protein is Laccase-1 (lcc1).